We begin with the raw amino-acid sequence, 139 residues long: 3-hydroxyacyl-[acyl-carrier-protein] dehydratase FabZ (139 aa).

H47 is an active-site residue.

The protein belongs to the thioester dehydratase family. FabZ subfamily.

It localises to the cytoplasm. It carries out the reaction a (3R)-hydroxyacyl-[ACP] = a (2E)-enoyl-[ACP] + H2O. Its function is as follows. Involved in unsaturated fatty acids biosynthesis. Catalyzes the dehydration of short chain beta-hydroxyacyl-ACPs and long chain saturated and unsaturated beta-hydroxyacyl-ACPs. This is 3-hydroxyacyl-[acyl-carrier-protein] dehydratase FabZ from Oenococcus oeni (strain ATCC BAA-331 / PSU-1).